Reading from the N-terminus, the 430-residue chain is Inner membrane transport protein YbaT (430 aa).

At 1 to 14 (MMNTEGNNGNKPLG) the chain is on the cytoplasmic side. Residues 15–35 (LWNVVSIGIGAMVGAGIFALL) traverse the membrane as a helical segment. The Periplasmic segment spans residues 36 to 38 (GQA). A helical transmembrane segment spans residues 39–59 (ALLMEASTWVAFAFGGIVAMF). Residues 60 to 88 (SGYAYARLGASYPSNGGIIDFFRRGLGNG) lie on the Cytoplasmic side of the membrane. Residues 89 to 109 (VFSLALSLLYLLTLAVSIAMV) traverse the membrane as a helical segment. Topologically, residues 110–128 (ARAFGAYAVQFLHEGSQEE) are periplasmic. A helical transmembrane segment spans residues 129 to 149 (HLILLYALGIIAVMTLFNSLS). Residues 150-157 (NHAVGRLE) lie on the Cytoplasmic side of the membrane. A helical transmembrane segment spans residues 158-178 (VILVGIKMMILLLLIIAGVWS). The Periplasmic segment spans residues 179–192 (LQPAHISVSAPPSS). A helical membrane pass occupies residues 193-213 (GAFFSCIGITFLAYAGFGMMA). Over 214-228 (NAADKVKDPQVIMPR) the chain is Cytoplasmic. Residues 229 to 249 (AFLVAIGVTTLLYISLALVLL) form a helical membrane-spanning segment. At 250–272 (SDVSALELEKYADTAVAQAASPL) the chain is on the periplasmic side. Residues 273-293 (LGHVGYVIVVIGALLATASAI) form a helical membrane-spanning segment. The Cytoplasmic portion of the chain corresponds to 294 to 325 (NANLFAVFNIMDNMGSERELPKLMNKSLWRQS). The chain crosses the membrane as a helical span at residues 326–346 (TWGNIIVVVLIMLMTAALNLG). Ser-347 is a topological domain (periplasmic). The chain crosses the membrane as a helical span at residues 348–368 (LASVASATFLICYLAVFVVAI). Residues 369–379 (RLRHDIHASLP) lie on the Cytoplasmic side of the membrane. A helical membrane pass occupies residues 380–400 (ILIVGTLVMLLVIVGFIYSLW). The Periplasmic portion of the chain corresponds to 401–403 (SQG). Residues 404 to 424 (SRALIWIIGSLLLSLIVAMVM) traverse the membrane as a helical segment. Over 425–430 (KRNKTV) the chain is Cytoplasmic.

This sequence belongs to the amino acid-polyamine-organocation (APC) superfamily.

It is found in the cell inner membrane. In terms of biological role, probable amino-acid or metabolite transport protein. This chain is Inner membrane transport protein YbaT (ybaT), found in Escherichia coli (strain K12).